We begin with the raw amino-acid sequence, 449 residues long: NADH-quinone oxidoreductase subunit H (449 aa).

A run of 9 helical transmembrane segments spans residues 26-46, 96-116, 136-156, 177-197, 211-231, 259-279, 298-318, 330-350, and 365-385; these read FWLILLKGVAVFAFLLLMTLF, PIFILAPILSAVPAFLAFAVI, LPVSVLYMLAAASLGVYGLIL, IISYEVAMGLSFVAVFIYAGT, WYIALVPSFVLYCISMVGETN, FFFLAEYINMVTVSAIATTLF, WVPLIWFVLKLLLFLFFFIWL, FMAFGWKVLIPVGLLWVLVIA, and WLIGAGVVIGIMLIVALLDPG. Residues 396 to 449 are disordered; sequence AERRKLAEAPSLESIPWPPPPPGGAHHRPAVPAGTSANGSSTVIPADPPPRQES.

This sequence belongs to the complex I subunit 1 family. NDH-1 is composed of 14 different subunits. Subunits NuoA, H, J, K, L, M, N constitute the membrane sector of the complex.

It is found in the cell membrane. The catalysed reaction is a quinone + NADH + 5 H(+)(in) = a quinol + NAD(+) + 4 H(+)(out). NDH-1 shuttles electrons from NADH, via FMN and iron-sulfur (Fe-S) centers, to quinones in the respiratory chain. The immediate electron acceptor for the enzyme in this species is believed to be ubiquinone. Couples the redox reaction to proton translocation (for every two electrons transferred, four hydrogen ions are translocated across the cytoplasmic membrane), and thus conserves the redox energy in a proton gradient. This subunit may bind ubiquinone. This chain is NADH-quinone oxidoreductase subunit H, found in Frankia alni (strain DSM 45986 / CECT 9034 / ACN14a).